Reading from the N-terminus, the 520-residue chain is MHTFLRSTALVVAGLSARALASIGPVTDFHIVNAAVSPDGFSRQAVLAEGVFPGPLIAGNKGDNFQINVIDELTNATMLKTTTIHWHGFFQHGTNWADGPAFINQCPIASGDSFLYNFQVPDQAGTFWYHSHLSTQYCDGLRGPFVVYDPADPYLDQYDVDDDSTVITLADWYHTAARLGSPFPAADTTLINGLGRCGEAGCPVSDLAVISVTKGKRYRFRLVSISCDSFFTFSIDGHSLNVIEVDATNHQPLTVDELTIYAGQRYSFILTADQDVDNYWIRANPGIGITTGFAGGINSAILRYDGADVVEPTTTQATSPVVLSESNLAPLTNAAAPGLPEVGGVDLALNFNLTFDGPSLKFQINGVTFVPPTVPVLLQILSGAQSAADLLPSGSVYALPSNATIELSLPAGALGGPHPFHLHGHTFSVVRPAGSTTYNYVNPVQRDVVSIGNTGDNVTIRFDTNNPGPWFLHCHIDWHLEAGFAVVFAEDIPDVASINPVPQDWSNLCPIYNALDASDH.

The signal sequence occupies residues 1-21; the sequence is MHTFLRSTALVVAGLSARALA. 2 Plastocyanin-like domains span residues 22 to 148 and 160 to 304; these read SIGP…FVVY and VDDD…ILRY. Asn-75 carries N-linked (GlcNAc...) asparagine glycosylation. Cu cation is bound by residues His-85, His-87, His-130, and His-132. 2 disulfides stabilise this stretch: Cys-106–Cys-509 and Cys-138–Cys-227. N-linked (GlcNAc...) asparagine glycans are attached at residues Asn-352 and Asn-402. Positions 373-496 constitute a Plastocyanin-like 3 domain; that stretch reads TVPVLLQILS…VFAEDIPDVA (124 aa). The Cu cation site is built by His-418, His-421, His-423, His-473, Cys-474, His-475, and His-479.

This sequence belongs to the multicopper oxidase family. Cu cation is required as a cofactor.

Its subcellular location is the secreted. It catalyses the reaction 4 hydroquinone + O2 = 4 benzosemiquinone + 2 H2O. Its function is as follows. Lignin degradation and detoxification of lignin-derived products. The polypeptide is Laccase (LAC) (Phlebia radiata (White-rot fungus)).